A 102-amino-acid chain; its full sequence is Glutaredoxin-C14 (102 aa).

The region spanning 1-101 (MDKVMRMSSE…PLIKPYQSFH (101 aa)) is the Glutaredoxin domain. A disulfide bridge connects residues C21 and C24.

Belongs to the glutaredoxin family. CC-type subfamily.

It localises to the cytoplasm. Functionally, has a glutathione-disulfide oxidoreductase activity in the presence of NADPH and glutathione reductase. Reduces low molecular weight disulfides and proteins. The sequence is that of Glutaredoxin-C14 (GRXC14) from Arabidopsis thaliana (Mouse-ear cress).